A 177-amino-acid polypeptide reads, in one-letter code: Neuroblastoma suppressor of tumorigenicity 1 (177 aa).

The signal sequence occupies residues 1–16; that stretch reads MLWFVVGALFPALLLA. Cystine bridges form between cysteine 34–cysteine 84, cysteine 48–cysteine 98, cysteine 58–cysteine 117, cysteine 62–cysteine 119, and cysteine 81–cysteine 122. Residues 34-123 form the CTCK domain; it reads CEAKNITQIV…ILHCSCQACG (90 aa). Positions 143-177 are disordered; the sequence is MPAEGPGPHHYAHHQQEVEEPPASSHHHHEEEGDE.

It belongs to the DAN family.

The protein resides in the secreted. May act as a tumor suppressor. This chain is Neuroblastoma suppressor of tumorigenicity 1 (NBL1), found in Gallus gallus (Chicken).